A 224-amino-acid chain; its full sequence is Prothoracicotropic hormone (224 aa).

The N-terminal stretch at 1–29 (MITRPIILVILCYAILMIVQSFVPKAVAL) is a signal peptide. 3 disulfide bridges follow: C132–C169, C155–C211, and C163–C213. Residue N156 is glycosylated (N-linked (GlcNAc...) asparagine).

As to quaternary structure, homodimer; disulfide-linked. In terms of tissue distribution, PTTH is synthesized by two dorsolateral neurosecretory cells of the Bombyx brain.

Functionally, PTTH is a brain secretory polypeptide of insects which stimulates the prothoracic glands to produce and release ecdysone, the steroid essential to insect development. In terms of biological role, peptides P2K and P6K are presumed to be cleaved post-translationally and may play some unknown physiologically or developmentally important functions. The protein is Prothoracicotropic hormone of Bombyx mori (Silk moth).